The following is a 333-amino-acid chain: Foldase protein PrsA (333 aa).

Residues 1–22 (MKKSTKLLAGIVTLASAMTLAA) form the signal peptide. Cys23 carries the N-palmitoyl cysteine lipid modification. Cys23 is lipidated: S-diacylglycerol cysteine. A PpiC domain is found at 145 to 240 (TPEMTTQVIT…NKFYIVKVTK (96 aa)). The disordered stretch occupies residues 301–333 (DKKASKANTSKSDQKTSSDSSKDSQSSKSKSEK). A compositionally biased stretch (basic and acidic residues) spans 312–322 (SDQKTSSDSSK). Residues 323 to 333 (DSQSSKSKSEK) are compositionally biased toward low complexity.

It belongs to the PrsA family.

The protein resides in the cell membrane. The enzyme catalyses [protein]-peptidylproline (omega=180) = [protein]-peptidylproline (omega=0). Functionally, plays a major role in protein secretion by helping the post-translocational extracellular folding of several secreted proteins. The sequence is that of Foldase protein PrsA from Streptococcus equi subsp. zooepidemicus (strain H70).